The following is a 176-amino-acid chain: Nucleoside triphosphate/diphosphate phosphatase (176 aa).

The active-site Proton donor is arginine 23. Asparagine 87, aspartate 103, aspartate 105, aspartate 107, aspartate 120, and glutamate 123 together coordinate Mg(2+).

This sequence belongs to the Ntdp family. Requires Mg(2+) as cofactor.

The enzyme catalyses a ribonucleoside 5'-triphosphate + H2O = a ribonucleoside 5'-diphosphate + phosphate + H(+). It carries out the reaction a ribonucleoside 5'-diphosphate + H2O = a ribonucleoside 5'-phosphate + phosphate + H(+). In terms of biological role, has nucleoside phosphatase activity towards nucleoside triphosphates and nucleoside diphosphates. This is Nucleoside triphosphate/diphosphate phosphatase from Bacillus licheniformis (strain ATCC 14580 / DSM 13 / JCM 2505 / CCUG 7422 / NBRC 12200 / NCIMB 9375 / NCTC 10341 / NRRL NRS-1264 / Gibson 46).